Here is a 71-residue protein sequence, read N- to C-terminus: MENNRKIISKNNINVQVFLVRSLIGKLNKKVKVLKALGLNKIGDKKVHFLNESIKGMLNETINMILLSEVM.

The protein belongs to the universal ribosomal protein uL30 family. As to quaternary structure, part of the 50S ribosomal subunit.

The sequence is that of Large ribosomal subunit protein uL30 from Borreliella burgdorferi (strain ATCC 35210 / DSM 4680 / CIP 102532 / B31) (Borrelia burgdorferi).